The sequence spans 305 residues: Formamidopyrimidine-DNA glycosylase (305 aa).

Residue P2 is the Schiff-base intermediate with DNA of the active site. E3 (proton donor) is an active-site residue. K59 functions as the Proton donor; for beta-elimination activity in the catalytic mechanism. Residues H92, R111, and R154 each contribute to the DNA site. Residues 239-273 (QVFDRAGEPCPVCGTPIRKVAVAQRGTHFCPRCQP) form an FPG-type zinc finger. R263 serves as the catalytic Proton donor; for delta-elimination activity. Positions 282-305 (PRRARPGRRGNSVRVAAEPPGTYE) are disordered.

It belongs to the FPG family. In terms of assembly, monomer. It depends on Zn(2+) as a cofactor.

It catalyses the reaction Hydrolysis of DNA containing ring-opened 7-methylguanine residues, releasing 2,6-diamino-4-hydroxy-5-(N-methyl)formamidopyrimidine.. The catalysed reaction is 2'-deoxyribonucleotide-(2'-deoxyribose 5'-phosphate)-2'-deoxyribonucleotide-DNA = a 3'-end 2'-deoxyribonucleotide-(2,3-dehydro-2,3-deoxyribose 5'-phosphate)-DNA + a 5'-end 5'-phospho-2'-deoxyribonucleoside-DNA + H(+). Involved in base excision repair of DNA damaged by oxidation or by mutagenic agents. Acts as a DNA glycosylase that recognizes and removes damaged bases. Has a preference for oxidized purines, such as 7,8-dihydro-8-oxoguanine (8-oxoG). Has AP (apurinic/apyrimidinic) lyase activity and introduces nicks in the DNA strand. Cleaves the DNA backbone by beta-delta elimination to generate a single-strand break at the site of the removed base with both 3'- and 5'-phosphates. This Symbiobacterium thermophilum (strain DSM 24528 / JCM 14929 / IAM 14863 / T) protein is Formamidopyrimidine-DNA glycosylase.